The sequence spans 278 residues: MADS-box transcription factor PHERES 2 (278 aa).

The region spanning 1–60 (MKRKMKLSLIENSVSRKTTFTKRKKGMTKKLTELVTLCGVEACAVVYSPFNSIPEAWPSR) is the MADS-box domain.

In terms of assembly, interacts with AGL61/DIANA and AGL62. As to expression, male gametophyte, embryo and endosperm.

It is found in the nucleus. Probable transcription factor involved in the development of gametophytes and seeds. This is MADS-box transcription factor PHERES 2 (PHE2) from Arabidopsis thaliana (Mouse-ear cress).